The chain runs to 84 residues: N.vectensis toxin 5 (84 aa).

An N-terminal signal peptide occupies residues 1–21; the sequence is MNSLLKVAVVCLVMLVACSSG. 3 cysteine pairs are disulfide-bonded: Cys-45–Cys-77, Cys-47–Cys-68, and Cys-61–Cys-78.

Expressed in ectodermal gland cells. In adult female tissues, highly transcribed in mesenteries (gametes-producing tissue) and slightly transcribed in tentacles, pharynx and physa.

Has toxic effects on zebrafish larvae. It causes contractile paralysis and twitching of the tail within 20 minutes, followed by death within 30 minutes. Does not show any toxicity when injected into arthropods (cherry shrimps or grass shrimps). The polypeptide is N.vectensis toxin 5 (Nematostella vectensis (Starlet sea anemone)).